Reading from the N-terminus, the 67-residue chain is MKTSAYVKELQAQSVEQLQAQLVDAKKELFNLRFQNATNQLDNTARIKEVRKNIARIQTVITAKAAE.

Belongs to the universal ribosomal protein uL29 family.

This is Large ribosomal subunit protein uL29 from Agathobacter rectalis (strain ATCC 33656 / DSM 3377 / JCM 17463 / KCTC 5835 / VPI 0990) (Eubacterium rectale).